The following is an 87-amino-acid chain: Small ribosomal subunit protein uS19 (87 aa).

A disordered region spans residues 1 to 29 (MARSLKKGPFVDHHLQKKVDVQNKEGTKK). The span at 9–28 (PFVDHHLQKKVDVQNKEGTK) shows a compositional bias: basic and acidic residues.

It belongs to the universal ribosomal protein uS19 family.

Its function is as follows. Protein S19 forms a complex with S13 that binds strongly to the 16S ribosomal RNA. The polypeptide is Small ribosomal subunit protein uS19 (Protochlamydia amoebophila (strain UWE25)).